Here is a 371-residue protein sequence, read N- to C-terminus: MASSDGKPGGIFDHHVQTAVCDSRAKYREGRRPRAVKVYTINLESQYLLIQGVPAVGAMKELVERFALYGAIEQYNALDEYPAEDFTEVYLIKFVKLQSARIAKKKMDEQSFFGGLLHVCYAPEFETVEETRKKLEERKAYISRVTKNQDYYVTKKKPVPEQKGTKDSRQDFHAHMPGFCTPALNTSPKNPSENSSPCLPYSCEFPLCYFASKSPCSPGEHTDKASDSCNSARNRGELQKHRDHSAFPPKLQMNTYKTSVPCSSVQEAIATSQAVGRFMPRTTQLQERKRRRDCDRELGTFLETNISSNEVLIGPKLPGIPTVDLQDDSLNTTANLIRSKLKEVTSSVPKPPEDNGEDVCTSHPRKQRRRI.

In terms of domain architecture, RRM spans 46–124; the sequence is QYLLIQGVPA…GLLHVCYAPE (79 aa). 2 disordered regions span residues 220–249 and 343–371; these read EHTD…AFPP and EVTS…RRRI.

Belongs to the RBM48 family. Component of the minor spliceosome. Within this complex, interacts with ARMC7 and PRPF8/PRP8.

In terms of biological role, as a component of the minor spliceosome, involved in the splicing of U12-type introns in pre-mRNAs. This chain is RNA-binding protein 48 (Rbm48), found in Rattus norvegicus (Rat).